The primary structure comprises 716 residues: Radial spoke head protein 4 homolog A (716 aa).

Disordered stretches follow at residues 1–164, 375–410, 506–526, and 697–716; these read MEDS…CGRR, EGED…PKSF, GEEE…FEEN, and LLAA…DDYD. Residues 8–25 show a composition bias toward basic and acidic residues; it reads KQEKENQEELGETRRPWE. Composition is skewed to low complexity over residues 29–42, 54–66, and 80–100; these read AASP…SSEP, QSRS…PQSR, and SSPA…LAPA. The span at 140–156 shows a compositional bias: polar residues; the sequence is HHTSQSEGNTFQQSQQP. A compositionally biased stretch (acidic residues) spans 375 to 389; the sequence is EGEDEEEVEEEDVAE. Ser396 is subject to Phosphoserine. 2 stretches are compositionally biased toward acidic residues: residues 506–516 and 701–716; these read GEEEGEEEEEA and ENEE…DDYD.

This sequence belongs to the flagellar radial spoke RSP4/6 family. Interacts with RSPH6A. In terms of tissue distribution, expressed in trachea, lungs, and testes. Very strong expression is detected in nasal brushings.

The protein localises to the cytoplasm. Its subcellular location is the cytoskeleton. It is found in the cilium axoneme. It localises to the cell projection. The protein resides in the cilium. Its function is as follows. Component of the axonemal radial spoke head which plays an important role in ciliary motility. Essential for triplet radial spokes (RS1, RS2 and RS3) head assembly in the motile cilia. The sequence is that of Radial spoke head protein 4 homolog A (RSPH4A) from Homo sapiens (Human).